Consider the following 155-residue polypeptide: Ribosomal RNA large subunit methyltransferase H (155 aa).

S-adenosyl-L-methionine-binding positions include L72, G103, and 122-127 (LSDLTL).

The protein belongs to the RNA methyltransferase RlmH family. In terms of assembly, homodimer.

Its subcellular location is the cytoplasm. The enzyme catalyses pseudouridine(1915) in 23S rRNA + S-adenosyl-L-methionine = N(3)-methylpseudouridine(1915) in 23S rRNA + S-adenosyl-L-homocysteine + H(+). In terms of biological role, specifically methylates the pseudouridine at position 1915 (m3Psi1915) in 23S rRNA. The chain is Ribosomal RNA large subunit methyltransferase H from Acidovorax sp. (strain JS42).